Consider the following 120-residue polypeptide: Phosphoribosyl-AMP cyclohydrolase (120 aa).

Residue Asp-74 coordinates Mg(2+). Residue Cys-75 coordinates Zn(2+). Residues Asp-76 and Asp-78 each contribute to the Mg(2+) site. Residues Cys-91 and Cys-98 each coordinate Zn(2+).

This sequence belongs to the PRA-CH family. Homodimer. Mg(2+) is required as a cofactor. It depends on Zn(2+) as a cofactor.

The protein resides in the cytoplasm. It carries out the reaction 1-(5-phospho-beta-D-ribosyl)-5'-AMP + H2O = 1-(5-phospho-beta-D-ribosyl)-5-[(5-phospho-beta-D-ribosylamino)methylideneamino]imidazole-4-carboxamide. It participates in amino-acid biosynthesis; L-histidine biosynthesis; L-histidine from 5-phospho-alpha-D-ribose 1-diphosphate: step 3/9. Catalyzes the hydrolysis of the adenine ring of phosphoribosyl-AMP. The chain is Phosphoribosyl-AMP cyclohydrolase from Natronomonas pharaonis (strain ATCC 35678 / DSM 2160 / CIP 103997 / JCM 8858 / NBRC 14720 / NCIMB 2260 / Gabara) (Halobacterium pharaonis).